The following is a 243-amino-acid chain: Probable transcriptional regulatory protein LGAS_1276 (243 aa).

The interval 1–22 (MSGHSKWHNIQGRKNAQDAKRG) is disordered.

Belongs to the TACO1 family.

The protein resides in the cytoplasm. The chain is Probable transcriptional regulatory protein LGAS_1276 from Lactobacillus gasseri (strain ATCC 33323 / DSM 20243 / BCRC 14619 / CIP 102991 / JCM 1131 / KCTC 3163 / NCIMB 11718 / NCTC 13722 / AM63).